The chain runs to 145 residues: Succinate dehydrogenase assembly factor 2, mitochondrial (145 aa).

The protein belongs to the SDHAF2 family. In terms of assembly, interacts with the flavoprotein subunit within the SDH catalytic dimer.

It localises to the mitochondrion matrix. Functionally, plays an essential role in the assembly of succinate dehydrogenase (SDH), an enzyme complex (also referred to as respiratory complex II) that is a component of both the tricarboxylic acid (TCA) cycle and the mitochondrial electron transport chain, and which couples the oxidation of succinate to fumarate with the reduction of ubiquinone (coenzyme Q) to ubiquinol. Required for flavinylation (covalent attachment of FAD) of the flavoprotein subunit of the SDH catalytic dimer. The protein is Succinate dehydrogenase assembly factor 2, mitochondrial of Yarrowia lipolytica (strain CLIB 122 / E 150) (Yeast).